Here is a 1024-residue protein sequence, read N- to C-terminus: Non-canonical nonribosomal peptide synthetase FrzA (1024 aa).

The tract at residues R29–R425 is adenylation (A) domain. The Carrier domain maps to N534–L611. S571 carries the post-translational modification O-(pantetheine 4'-phosphoryl)serine. Residues L655–I898 enclose the Thioester reductase (TE) domain.

Belongs to the NRP synthetase family. It depends on pantetheine 4'-phosphate as a cofactor.

It carries out the reaction L-tyrosinal + AMP + diphosphate + NADP(+) = L-tyrosine + ATP + NADPH + H(+). It functions in the pathway secondary metabolite biosynthesis. In terms of biological role, non-canonical nonribosomal peptide synthetase; part of the gene cluster that mediates the biosynthesis of the alkaloid (-)-FR901483, a potent immunosuppressant that shows efficacy in animal models and a probable inhibitor of purine nucleotide biosynthesis by targeting phosphoribosylpyrophosphate amidotransferase (PPAT). Within the pathway, FrzA catalyzes the reduction of L-tyrosine via its C-terminal reductase domain to produce L-tyrosinal. The biosynthesis of (-)-FR901483 starts with the condensation of two L-tyrosines to yield (S,S)-dityrosyl-piperazine. This process occurs in 3 steps with the non-canonical nonribosomal peptide synthetase FrzA catalyzing the reduction of L-tyrosine into L-tyrosinal, the spontaneous condensation of 2 L-tyrosinal units, and the subsequent reduction by the NmrA-like family domain-containing oxidoreductase FrzB. The cytochrome P450 monooxygenase FrzC then performs coupling between N10 and C1' to morph the piperazine into a 1,4-diazabicyclo[3.2.1]octane spiro-fused to a 2,5-cyclohexadienone. The dienone portion is further reduced to cyclohexanone by the flavin-dependent reductase FrzD. The methyltranserases (MTs) FrzE and FrzF are then involved in the methylation at the C10' amine and the C4 phenolic oxygen, respectively. The order of the two MTs appear to be interchangeable. Cleavage of the C9-N10' bond by the dioxygenase FrzG then leads to formation of a conjugated iminium. In addition to the oxidation of C9, an additional dehydrogenation between C7 and C8 can occur to give a likely shunt product. The next biosynthetic step is the intramolecular aldol condensation catalyzed by the newly identified aldolase FrzH to yield an aza-tricyclic product with the formation of a C9-C3' bond. The short-chain dehydrogenase/reductase FrzI then produces dephospho-(-)-FR901483 that is phosphorylated at C4'-OH into (-)-FR901483 by the phosphotransferase FrzJ. The chain is Non-canonical nonribosomal peptide synthetase FrzA from Cladobotryum sp.